The sequence spans 522 residues: Leucine-rich repeat transmembrane neuronal protein 1 (522 aa).

An N-terminal signal peptide occupies residues 1 to 34 (MDFLLLGLCLYWLLRRPSGVVLCLLGACFQMLPA). The region spanning 35-63 (APSGCPQLCRCEGRLLYCEALNLTEAPHN) is the LRRNT domain. Topologically, residues 35 to 427 (APSGCPQLCR…HAENAVQIHK (393 aa)) are extracellular. N-linked (GlcNAc...) asparagine glycosylation is found at N56 and N63. LRR repeat units follow at residues 64-87 (LSGL…QFTG), 89-111 (MQLT…AFQK), 112-135 (LRRV…TFRP), 137-159 (PNLR…LFHG), 161-183 (RKLT…IFQD), 184-207 (CRSL…SFAG), 209-231 (FKLT…HFPR), 233-255 (ISLH…LDWV), 256-278 (WNLE…VFET), and 279-302 (VPHL…ILNS). N130 carries an N-linked (GlcNAc...) asparagine glycan. Positions 314–365 (NLWDCGRNVCALASWLNNFQGRYDGNLQCASPEYAQGEDVLDAVYAFHLCED) constitute an LRRCT domain. Residue N380 is glycosylated (N-linked (GlcNAc...) asparagine). A disordered region spans residues 382–401 (SDLGPPASSATTLADGGEGQ). A helical membrane pass occupies residues 428 to 448 (VVTGTMALIFSFLIVVLVLYV). The Cytoplasmic segment spans residues 449-522 (SWKCFPASLR…HQQPARECEV (74 aa)).

The protein belongs to the LRRTM family. In terms of tissue distribution, predominantly expressed in forebrain regions including thalamus and cerebral cortex.

The protein resides in the cell membrane. Its subcellular location is the postsynaptic cell membrane. Functionally, exhibits strong synaptogenic activity, restricted to excitatory presynaptic differentiation, acting at both pre- and postsynaptic level. This Homo sapiens (Human) protein is Leucine-rich repeat transmembrane neuronal protein 1 (LRRTM1).